Consider the following 108-residue polypeptide: DNA-directed RNA polymerase III subunit RPC10 (108 aa).

Zn(2+) is bound by residues cysteine 5, cysteine 8, cysteine 25, cysteine 28, cysteine 69, and cysteine 72. The C4-type zinc-finger motif lies at 5-28 (CPGCGNGLIVEEGQRCHRFACNTC). The TFIIS-type zinc finger occupies 65-107 (TAEPCPKCEHPRAYFMQLQTRSADEPMTTFYKCCNAQCGHRWR). The Hairpin motif lies at 88–89 (DE). 2 residues coordinate Zn(2+): cysteine 98 and cysteine 102.

It belongs to the archaeal RpoM/eukaryotic RPA12/RPB9/RPC11 RNA polymerase family. In terms of assembly, component of the RNA polymerase III complex consisting of 17 subunits: a ten-subunit horseshoe-shaped catalytic core composed of POLR3A/RPC1, POLR3B/RPC2, POLR1C/RPAC1, POLR1D/RPAC2, POLR3K/RPC10, POLR2E/RPABC1, POLR2F/RPABC2, POLR2H/RPABC3, POLR2K/RPABC4 and POLR2L/RPABC5; a mobile stalk composed of two subunits POLR3H/RPC8 and CRCP/RPC9, protruding from the core and functioning primarily in transcription initiation; and additional subunits homologous to general transcription factors of the RNA polymerase II machinery, POLR3C/RPC3-POLR3F/RPC6-POLR3G/RPC7 heterotrimer required for transcription initiation and POLR3D/RPC4-POLR3E/RPC5 heterodimer involved in both transcription initiation and termination.

The protein resides in the nucleus. Core component of RNA polymerase III (Pol III) which synthesizes small non-coding RNAs using the four ribonucleoside triphosphates as substrates. Can mediate Pol I proofreading of the nascent RNA transcript. Anchors into the Pol III active site to constantly monitor transcription fidelity, cleaves mis-incorporated 5'-ribonucleotides and restarts the transcription process. Once Pol III reaches the poly(dT) termination signal, can induce Pol III clamp opening and transcription termination. Pol III plays an important role in sensing and limiting infection by intracellular bacteria and DNA viruses. Acts as a nuclear and cytosolic DNA sensor involved in innate immune response. Can sense non-self dsDNA that serves as template for transcription into dsRNA. The non-self RNA polymerase III transcripts, such as Epstein-Barr virus-encoded RNAs (EBERs) induce type I interferon and NF-kappa-B through the RIG-I pathway. This is DNA-directed RNA polymerase III subunit RPC10 from Mus musculus (Mouse).